A 547-amino-acid chain; its full sequence is Membrane transporter D1 (547 aa).

At 1 to 2 the chain is on the cytoplasmic side; sequence MR. The chain crosses the membrane as a helical span at residues 3–25; it reads ASVMLCAALGGFLFGYDTGVINA. Residues 26–43 lie on the Extracellular side of the membrane; the sequence is ALFQMKDHFGFSEHSWQY. The helical transmembrane segment at 44–64 threads the bilayer; the sequence is ALIVAIAIAGAFVGAFISGFI. At 65–78 the chain is on the cytoplasmic side; it reads SAAFGRRPCIAVAD. The chain crosses the membrane as a helical span at residues 79–99; sequence ALFVIGSVLMGAAPNVEVVLV. The Extracellular portion of the chain corresponds to 100–101; the sequence is SR. A helical transmembrane segment spans residues 102–122; it reads VIVGLAIGISSATIPVYLAEV. Residues 123–136 are Cytoplasmic-facing; the sequence is TSPKHRGATIVLNN. Residues 137–157 traverse the membrane as a helical segment; it reads LFLTGGQFVAAGFTAIMVVFT. At 158 to 164 the chain is on the extracellular side; it reads SKNIGWR. A helical transmembrane segment spans residues 165 to 185; the sequence is VAIGIGALPAVVQAFCLLFFL. Over 186-245 the chain is Cytoplasmic; the sequence is PESPRWLLSKGHADRAKAVADKFEVDLCEFQEGDELPSVRIDYRPLMARDMRFRVVLSSG. A helical membrane pass occupies residues 246–266; it reads LQIIQQFSGINTIMYYSSVIL. Over 267 to 276 the chain is Extracellular; the sequence is YDAGFRDAIM. A helical membrane pass occupies residues 277-297; it reads PVVLSIPLAFMNALFTAVAIF. Residues 298-308 lie on the Cytoplasmic side of the membrane; that stretch reads TVDRFGRRRML. Residues 309 to 329 form a helical membrane-spanning segment; it reads LISVFGCLVLLVVIAIIGFFI. The Extracellular segment spans residues 330–339; it reads GTRISYSVGG. A helical transmembrane segment spans residues 340 to 360; it reads GLFLALLAVFLALYAPGIGCI. Over 361–385 the chain is Cytoplasmic; that stretch reads PWVIMGEIFPTHLRTSAASVATMAN. A helical transmembrane segment spans residues 386–406; the sequence is WGANVLVSQVFPILMGAIGVG. Gly407 is a topological domain (extracellular). Residues 408 to 428 form a helical membrane-spanning segment; the sequence is TFTIISGLMALGCIFVYFFAV. Residues 429–547 lie on the Cytoplasmic side of the membrane; it reads ETKGLTLEQI…AIKAAPHEPK (119 aa). Disordered regions lie at residues 449-468 and 510-547; these read PPRF…YRED and VSNK…HEPK. The span at 519-529 shows a compositional bias: polar residues; that stretch reads TSSSSDPQSLE.

It belongs to the major facilitator superfamily. Sugar transporter (TC 2.A.1.1) family.

Its subcellular location is the membrane. The polypeptide is Membrane transporter D1 (Leishmania donovani).